The sequence spans 280 residues: Formyltetrahydrofolate deformylase (280 aa).

The 79-residue stretch at 8–86 folds into the ACT domain; sequence VLRTICPDQK…RELNPAGRRR (79 aa). The active site involves D225.

This sequence belongs to the PurU family. Homohexamer.

It catalyses the reaction (6R)-10-formyltetrahydrofolate + H2O = (6S)-5,6,7,8-tetrahydrofolate + formate + H(+). Its pathway is purine metabolism; IMP biosynthesis via de novo pathway; formate from 10-formyl-5,6,7,8-tetrahydrofolate: step 1/1. Activated by methionine, inhibited by glycine. Its function is as follows. Catalyzes the hydrolysis of 10-formyltetrahydrofolate (formyl-FH4) to formate and tetrahydrofolate (FH4). Provides the major source of formate for the PurT-dependent synthesis of 5'-phosphoribosyl-N-formylglycinamide (FGAR) during aerobic growth. Has a role in regulating the one-carbon pool. The chain is Formyltetrahydrofolate deformylase from Escherichia coli (strain K12).